A 311-amino-acid polypeptide reads, in one-letter code: Zeta-sarcoglycan (311 aa).

Topologically, residues 1–50 (MDRSTDLDIQELKMTREQYILATQQNNLPRPENAQLYPVGIYGWRKRCLY) are cytoplasmic. A helical; Signal-anchor for type II membrane protein membrane pass occupies residues 51–71 (FFVLLLLVTMIVNLAMTIWIL). Over 72-311 (KVMNFTVDGM…QSSSSICLWN (240 aa)) the chain is Extracellular. Asparagine 75 and asparagine 123 each carry an N-linked (GlcNAc...) asparagine glycan. Cysteine 285 and cysteine 301 form a disulfide bridge.

The protein belongs to the sarcoglycan beta/delta/gamma/zeta family. As to expression, expressed in the heart, skeletal muscle and arterial vascular smooth muscle.

It localises to the cell membrane. It is found in the sarcolemma. Its subcellular location is the cytoplasm. The protein localises to the cytoskeleton. Functionally, component of the sarcoglycan complex, a subcomplex of the dystrophin-glycoprotein complex which forms a link between the F-actin cytoskeleton and the extracellular matrix. May play a role in the maintenance of striated muscle membrane stability. The chain is Zeta-sarcoglycan (Sgcz) from Mus musculus (Mouse).